The following is a 223-amino-acid chain: NAD(P)H-hydrate epimerase (223 aa).

The region spanning Met-9 to Phe-209 is the YjeF N-terminal domain. Asn-57 to Asp-61 lines the (6S)-NADPHX pocket. 2 residues coordinate K(+): Asn-58 and Asp-119. Residues Gly-123–Leu-129 and Asp-152 each bind (6S)-NADPHX. A K(+)-binding site is contributed by Thr-155.

Belongs to the NnrE/AIBP family. K(+) is required as a cofactor.

It catalyses the reaction (6R)-NADHX = (6S)-NADHX. It carries out the reaction (6R)-NADPHX = (6S)-NADPHX. Its function is as follows. Catalyzes the epimerization of the S- and R-forms of NAD(P)HX, a damaged form of NAD(P)H that is a result of enzymatic or heat-dependent hydration. This is a prerequisite for the S-specific NAD(P)H-hydrate dehydratase to allow the repair of both epimers of NAD(P)HX. This chain is NAD(P)H-hydrate epimerase, found in Leuconostoc gelidum subsp. gasicomitatum (strain DSM 15947 / CCUG 46042 / CECT 5767 / JCM 12535 / LMG 18811 / NBRC 113245 / TB1-10) (Leuconostoc gasicomitatum).